Reading from the N-terminus, the 184-residue chain is Nutrient stress-induced DNA-binding protein (184 aa).

It belongs to the Dps family. As to quaternary structure, hexamer.

Its function is as follows. Involved in protection of chromosomal DNA from damage under nutrient-limited and oxidative stress conditions. Binds heme. This chain is Nutrient stress-induced DNA-binding protein (dpsA), found in Nostoc sp. (strain PCC 7120 / SAG 25.82 / UTEX 2576).